The chain runs to 431 residues: uncharacterized protein (431 aa).

The next 11 helical transmembrane spans lie at 33-53 (VARV…VIYL), 63-83 (FSVF…ANGL), 111-131 (VSGM…PLWS), 143-163 (VALL…LGML), 197-217 (LVGF…MLMT), 241-261 (AHSI…PVLL), 273-293 (GVVI…LTAM), 318-338 (LIGG…PWIM), 358-378 (AAAV…AAAL), 383-403 (SLGW…PLSL), and 407-427 (TVVA…VALA).

This sequence to M.tuberculosis Rv1510 and Rv3630.

Its subcellular location is the cell membrane. This is an uncharacterized protein from Mycobacterium bovis (strain ATCC BAA-935 / AF2122/97).